Here is a 429-residue protein sequence, read N- to C-terminus: Light-independent protochlorophyllide reductase subunit N (429 aa).

[4Fe-4S] cluster-binding residues include Cys32, Cys57, and Cys118.

It belongs to the BchN/ChlN family. Protochlorophyllide reductase is composed of three subunits; BchL, BchN and BchB. Forms a heterotetramer of two BchB and two BchN subunits. [4Fe-4S] cluster is required as a cofactor.

It catalyses the reaction chlorophyllide a + oxidized 2[4Fe-4S]-[ferredoxin] + 2 ADP + 2 phosphate = protochlorophyllide a + reduced 2[4Fe-4S]-[ferredoxin] + 2 ATP + 2 H2O. Its pathway is porphyrin-containing compound metabolism; bacteriochlorophyll biosynthesis (light-independent). Functionally, component of the dark-operative protochlorophyllide reductase (DPOR) that uses Mg-ATP and reduced ferredoxin to reduce ring D of protochlorophyllide (Pchlide) to form chlorophyllide a (Chlide). This reaction is light-independent. The NB-protein (BchN-BchB) is the catalytic component of the complex. The protein is Light-independent protochlorophyllide reductase subunit N of Rhodopseudomonas palustris (strain TIE-1).